The sequence spans 461 residues: Protein FAM124B (461 aa).

Position 49 is a phosphoserine (S49). The tract at residues 302–346 (VELPEPGGRPVSDGSSNTWWKSAGGSAQPSSPATESQPQLSSLHL) is disordered. The segment covering 323–334 (SAGGSAQPSSPA) has biased composition (low complexity).

The protein belongs to the FAM124 family. Interacts with CHD7 and CHD8.

The protein resides in the nucleus. This is Protein FAM124B (FAM124B) from Bos taurus (Bovine).